A 391-amino-acid chain; its full sequence is Aspartate carbamoyltransferase 3, chloroplastic (391 aa).

Residues 1–69 constitute a chloroplast transit peptide; it reads MTASSSLFSC…SKCDKMIKTR (69 aa). Residues R137 and T138 each coordinate carbamoyl phosphate. The UMP site is built by R137 and T138. K167 is a binding site for L-aspartate. Residues R188, H216, and Q219 each coordinate carbamoyl phosphate. UMP contacts are provided by R188 and H216. 2 residues coordinate UMP: R249 and R311. Residues R249 and R311 each coordinate L-aspartate. L351 and P352 together coordinate carbamoyl phosphate.

It belongs to the aspartate/ornithine carbamoyltransferase superfamily. ATCase family. As to quaternary structure, homotrimer.

Its subcellular location is the plastid. It is found in the chloroplast. It catalyses the reaction carbamoyl phosphate + L-aspartate = N-carbamoyl-L-aspartate + phosphate + H(+). The protein operates within pyrimidine metabolism; UMP biosynthesis via de novo pathway; (S)-dihydroorotate from bicarbonate: step 2/3. Feedback inhibited by UMP. Functionally, catalyzes the condensation of carbamoyl phosphate and aspartate to form carbamoyl aspartate and inorganic phosphate, the committed step in the de novo pyrimidine nucleotide biosynthesis pathway. The chain is Aspartate carbamoyltransferase 3, chloroplastic (PYRB3) from Pisum sativum (Garden pea).